Here is a 561-residue protein sequence, read N- to C-terminus: Small ribosomal subunit protein bS1 (561 aa).

6 consecutive S1 motif domains span residues 22–88, 106–172, 193–261, 278–348, 365–435, and 452–521; these read GEVI…LSRE, GDIL…VSRR, GSVI…LGMK, GTRL…LGMK, GDKI…LGIK, and GSLV…LSVK.

This sequence belongs to the bacterial ribosomal protein bS1 family.

Its function is as follows. Binds mRNA; thus facilitating recognition of the initiation point. It is needed to translate mRNA with a short Shine-Dalgarno (SD) purine-rich sequence. This chain is Small ribosomal subunit protein bS1 (rpsA), found in Neisseria meningitidis serogroup B (strain ATCC BAA-335 / MC58).